We begin with the raw amino-acid sequence, 291 residues long: Protein CMSS1 (291 aa).

The tract at residues 1–96 (MADDLGDEWW…KKTITDVLTS (96 aa)) is disordered. Positions 17–27 (DVPEVEEETEH) are enriched in acidic residues. Positions 58–79 (VKKECFITQERSEEKPDNESNK) are enriched in basic and acidic residues.

The protein belongs to the CMS1 family.

The protein is Protein CMSS1 (cmss1) of Danio rerio (Zebrafish).